The following is a 275-amino-acid chain: Thymidylate synthase (275 aa).

138–139 (RR) serves as a coordination point for dUMP. C158 functions as the Nucleophile in the catalytic mechanism. DUMP is bound by residues 178 to 181 (RSCD), N189, and 219 to 221 (HIY). (6R)-5,10-methylene-5,6,7,8-tetrahydrofolate is bound at residue D181. A274 contributes to the (6R)-5,10-methylene-5,6,7,8-tetrahydrofolate binding site.

Belongs to the thymidylate synthase family. Bacterial-type ThyA subfamily. In terms of assembly, homodimer.

It localises to the cytoplasm. The enzyme catalyses dUMP + (6R)-5,10-methylene-5,6,7,8-tetrahydrofolate = 7,8-dihydrofolate + dTMP. Its pathway is pyrimidine metabolism; dTTP biosynthesis. Catalyzes the reductive methylation of 2'-deoxyuridine-5'-monophosphate (dUMP) to 2'-deoxythymidine-5'-monophosphate (dTMP) while utilizing 5,10-methylenetetrahydrofolate (mTHF) as the methyl donor and reductant in the reaction, yielding dihydrofolate (DHF) as a by-product. This enzymatic reaction provides an intracellular de novo source of dTMP, an essential precursor for DNA biosynthesis. The sequence is that of Thymidylate synthase from Fusobacterium nucleatum subsp. nucleatum (strain ATCC 25586 / DSM 15643 / BCRC 10681 / CIP 101130 / JCM 8532 / KCTC 2640 / LMG 13131 / VPI 4355).